A 367-amino-acid polypeptide reads, in one-letter code: MSDSQTLVVKLGTSVLTGGSRRLNRAHIVELVRQCAQLHAAGHRIVIVTSGAIAAGREHLGYPELPATIASKQLLAAVGQSRLIQLWEQLFSIYGIHIGQMLLTRADMEDRERFLNARDTLRALLDNHIVPVINENDAVATAEIKVGDNDNLSALAAILAGADKLLLLTDQQGLFTADPRSNPQAELIKDVYGVDDALRSIAGDSVSGLGIGGMSTKLQAADVACRAGIDTIIASGSKPGVIGDVMEGISVGTRFHAQASPLENRKRWIFGAPPAGEITVDEGATAAMLERGSSLLPKGIKSVTGNFSRGEVIRICNLQGRDIAHGVSRYNSDALRRIAGHHSQQIDAILGYEYGPVAVHRDDMITR.

Lysine 10 is a binding site for ATP. 3 residues coordinate substrate: serine 50, aspartate 137, and asparagine 149. Residue 169–170 (TD) participates in ATP binding. Residues 275–353 (AGEITVDEGA…QQIDAILGYE (79 aa)) form the PUA domain.

The protein belongs to the glutamate 5-kinase family.

Its subcellular location is the cytoplasm. The catalysed reaction is L-glutamate + ATP = L-glutamyl 5-phosphate + ADP. Its pathway is amino-acid biosynthesis; L-proline biosynthesis; L-glutamate 5-semialdehyde from L-glutamate: step 1/2. In terms of biological role, catalyzes the transfer of a phosphate group to glutamate to form L-glutamate 5-phosphate. This is Glutamate 5-kinase from Salmonella paratyphi B (strain ATCC BAA-1250 / SPB7).